A 271-amino-acid chain; its full sequence is Secretagogin (271 aa).

EF-hand domains follow at residues 8–43 (LDAA…LLKK), 53–88 (KVQG…EDEN), 100–135 (DNSV…LFLQ), 144–179 (KLDE…QENF), 192–227 (ERKS…MMEL), and 235–271 (VDLD…KANP). The Ca(2+) site is built by Asp21, Asp23, Asn25, Tyr27, and Glu32. Ca(2+) is bound by residues Asp113, Asp115, Ser117, Glu124, Asn159, Asp161, Arg163, Asp168, Asp205, Ser207, Thr209, Glu216, Asp249, Asn251, Asp253, Lys255, and Glu260.

The protein resides in the cytoplasm. The protein is Secretagogin (scgn) of Xenopus laevis (African clawed frog).